The primary structure comprises 103 residues: Small ribosomal subunit protein uS10 (103 aa).

It belongs to the universal ribosomal protein uS10 family. Part of the 30S ribosomal subunit.

Functionally, involved in the binding of tRNA to the ribosomes. In Campylobacter fetus subsp. fetus (strain 82-40), this protein is Small ribosomal subunit protein uS10.